We begin with the raw amino-acid sequence, 460 residues long: Elongation factor 1-alpha (460 aa).

A N,N,N-trimethylglycine modification is found at glycine 2. Lysine 3 bears the N6,N6-dimethyllysine; alternate mark. Lysine 3 is modified (N6-methyllysine; alternate). The region spanning 6 to 241 (KTHINLVVIG…DAIDPPTRPT (236 aa)) is the tr-type G domain. Residues 15–22 (GHVDSGKS) form a G1 region. Residue 15 to 22 (GHVDSGKS) coordinates GTP. Lysine 31 carries the post-translational modification N6-methyllysine. The G2 stretch occupies residues 71 to 75 (GITID). Lysine 80 bears the N6,N6,N6-trimethyllysine mark. Residues 92 to 95 (DAPG) are G3. GTP contacts are provided by residues 92 to 96 (DAPGH) and 154 to 157 (NKMD). The G4 stretch occupies residues 154–157 (NKMD). The interval 193 to 195 (SGF) is G5. An N6,N6-dimethyllysine; alternate modification is found at lysine 317. Residue lysine 317 is modified to N6-methyllysine; alternate. The residue at position 391 (lysine 391) is an N6-methyllysine.

It belongs to the TRAFAC class translation factor GTPase superfamily. Classic translation factor GTPase family. EF-Tu/EF-1A subfamily.

The protein resides in the cytoplasm. This protein promotes the GTP-dependent binding of aminoacyl-tRNA to the A-site of ribosomes during protein biosynthesis. This chain is Elongation factor 1-alpha (TEF), found in Coccidioides immitis (strain RS) (Valley fever fungus).